The following is a 331-amino-acid chain: GTP 3',8-cyclase (331 aa).

The Radical SAM core domain occupies 6-231 (PFGRTISYLR…TDIPFKTGGP (226 aa)). Arg-15 contributes to the GTP binding site. 2 residues coordinate [4Fe-4S] cluster: Cys-22 and Cys-26. An S-adenosyl-L-methionine-binding site is contributed by Tyr-28. Cys-29 is a binding site for [4Fe-4S] cluster. A GTP-binding site is contributed by Arg-64. Residue Gly-68 coordinates S-adenosyl-L-methionine. Thr-98 contacts GTP. Ser-122 is an S-adenosyl-L-methionine binding site. Lys-158 provides a ligand contact to GTP. Met-192 serves as a coordination point for S-adenosyl-L-methionine. Residues Cys-255 and Cys-258 each contribute to the [4Fe-4S] cluster site. Position 260–262 (260–262 (RVR)) interacts with GTP. Position 272 (Cys-272) interacts with [4Fe-4S] cluster.

Belongs to the radical SAM superfamily. MoaA family. Monomer and homodimer. [4Fe-4S] cluster serves as cofactor.

The catalysed reaction is GTP + AH2 + S-adenosyl-L-methionine = (8S)-3',8-cyclo-7,8-dihydroguanosine 5'-triphosphate + 5'-deoxyadenosine + L-methionine + A + H(+). Its pathway is cofactor biosynthesis; molybdopterin biosynthesis. Functionally, catalyzes the cyclization of GTP to (8S)-3',8-cyclo-7,8-dihydroguanosine 5'-triphosphate. The protein is GTP 3',8-cyclase of Mesorhizobium japonicum (strain LMG 29417 / CECT 9101 / MAFF 303099) (Mesorhizobium loti (strain MAFF 303099)).